Consider the following 132-residue polypeptide: Protein NrdI (132 aa).

Belongs to the NrdI family.

Probably involved in ribonucleotide reductase function. The chain is Protein NrdI from Agrobacterium fabrum (strain C58 / ATCC 33970) (Agrobacterium tumefaciens (strain C58)).